The following is a 199-amino-acid chain: NAD(P)H dehydrogenase (quinone) (199 aa).

The 187-residue stretch at 4–190 (VLVLYYSTYG…DGARYQGRHV (187 aa)) folds into the Flavodoxin-like domain. FMN-binding positions include 10 to 15 (STYGHI) and 78 to 80 (TRY). Tyr-12 lines the NAD(+) pocket. Trp-98 is a substrate binding site. FMN-binding positions include 113–119 (SSASQHG) and His-134.

Belongs to the WrbA family. FMN is required as a cofactor.

The enzyme catalyses a quinone + NADH + H(+) = a quinol + NAD(+). The catalysed reaction is a quinone + NADPH + H(+) = a quinol + NADP(+). The sequence is that of NAD(P)H dehydrogenase (quinone) from Methylobacterium sp. (strain 4-46).